A 376-amino-acid polypeptide reads, in one-letter code: Dihydroorotate dehydrogenase (quinone) (376 aa).

FMN is bound by residues 74-78 and Thr-98; that span reads AGFDK. Substrate is bound at residue Lys-78. 123–127 is a binding site for substrate; sequence NRMGF. 2 residues coordinate FMN: Asn-155 and Asn-188. Asn-188 lines the substrate pocket. Ser-191 acts as the Nucleophile in catalysis. Asn-193 contacts substrate. FMN-binding residues include Lys-226 and Thr-254. 255 to 256 serves as a coordination point for substrate; that stretch reads NT. Residues Gly-284, Gly-313, and 334–335 contribute to the FMN site; that span reads YT.

It belongs to the dihydroorotate dehydrogenase family. Type 2 subfamily. Monomer. It depends on FMN as a cofactor.

Its subcellular location is the cell membrane. It catalyses the reaction (S)-dihydroorotate + a quinone = orotate + a quinol. It functions in the pathway pyrimidine metabolism; UMP biosynthesis via de novo pathway; orotate from (S)-dihydroorotate (quinone route): step 1/1. Its function is as follows. Catalyzes the conversion of dihydroorotate to orotate with quinone as electron acceptor. The sequence is that of Dihydroorotate dehydrogenase (quinone) from Nostoc punctiforme (strain ATCC 29133 / PCC 73102).